The sequence spans 462 residues: Glycine--tRNA ligase (462 aa).

Residues arginine 100 and glutamate 174 each contribute to the substrate site. ATP is bound by residues 206 to 208, 216 to 221, 290 to 291, and 334 to 337; these read RNE, FRTREF, EL, and GADR. Residue 221 to 225 coordinates substrate; it reads FEQME. 330-334 contributes to the substrate binding site; the sequence is EPSLG.

This sequence belongs to the class-II aminoacyl-tRNA synthetase family. As to quaternary structure, homodimer.

It is found in the cytoplasm. It catalyses the reaction tRNA(Gly) + glycine + ATP = glycyl-tRNA(Gly) + AMP + diphosphate. Functionally, catalyzes the attachment of glycine to tRNA(Gly). This is Glycine--tRNA ligase from Acetivibrio thermocellus (strain ATCC 27405 / DSM 1237 / JCM 9322 / NBRC 103400 / NCIMB 10682 / NRRL B-4536 / VPI 7372) (Clostridium thermocellum).